Reading from the N-terminus, the 341-residue chain is Putative amino-acid ABC transporter-binding protein YhdW (341 aa).

An N-terminal signal peptide occupies residues 1-19 (MKKMMIATLAAASVLLAVA).

Belongs to the bacterial solute-binding protein 3 family.

The protein localises to the periplasm. Functionally, probably part of the binding-protein-dependent transport system YdhWXYZ for an amino acid. This is Putative amino-acid ABC transporter-binding protein YhdW (yhdW) from Escherichia coli (strain K12).